Consider the following 387-residue polypeptide: Cytochrome b (387 aa).

The next 4 helical transmembrane spans lie at 32–52 (FGSL…TLAM), 76–98 (WLVR…LHIG), 113–133 (TWAI…LGYV), and 179–199 (FFAL…MHLI). Heme b is bound by residues His82 and His96. Heme b-binding residues include His183 and His197. An a ubiquinone-binding site is contributed by His202. The next 4 membrane-spanning stretches (helical) occupy residues 226-246 (FIFK…IFVF), 290-310 (LLGV…PITD), 322-342 (LSKV…QIGA), and 349-369 (FIEF…VIVP).

It belongs to the cytochrome b family. In terms of assembly, fungal cytochrome b-c1 complex contains 10 subunits; 3 respiratory subunits, 2 core proteins and 5 low-molecular weight proteins. Cytochrome b-c1 complex is a homodimer. It depends on heme b as a cofactor.

It localises to the mitochondrion inner membrane. Functionally, component of the ubiquinol-cytochrome c reductase complex (complex III or cytochrome b-c1 complex) that is part of the mitochondrial respiratory chain. The b-c1 complex mediates electron transfer from ubiquinol to cytochrome c. Contributes to the generation of a proton gradient across the mitochondrial membrane that is then used for ATP synthesis. The protein is Cytochrome b (cob) of Emericella nidulans (Aspergillus nidulans).